We begin with the raw amino-acid sequence, 415 residues long: Granaticin polyketide putative beta-ketoacyl synthase 2 (415 aa).

Residues 6–406 (RRRAVVTGLS…GFNSAVVVTL (401 aa)) form the Ketosynthase family 3 (KS3) domain.

This sequence belongs to the thiolase-like superfamily. Beta-ketoacyl-ACP synthases family.

It functions in the pathway antibiotic biosynthesis; granaticin biosynthesis. The sequence is that of Granaticin polyketide putative beta-ketoacyl synthase 2 (gra-orf2) from Streptomyces violaceoruber.